Here is a 209-residue protein sequence, read N- to C-terminus: Orotate phosphoribosyltransferase (209 aa).

5-phospho-alpha-D-ribose 1-diphosphate-binding positions include Arg96, Lys100, His102, and Glu122–Ser130. Ser126 is an orotate binding site.

This sequence belongs to the purine/pyrimidine phosphoribosyltransferase family. PyrE subfamily. As to quaternary structure, homodimer. The cofactor is Mg(2+).

It catalyses the reaction orotidine 5'-phosphate + diphosphate = orotate + 5-phospho-alpha-D-ribose 1-diphosphate. The protein operates within pyrimidine metabolism; UMP biosynthesis via de novo pathway; UMP from orotate: step 1/2. Functionally, catalyzes the transfer of a ribosyl phosphate group from 5-phosphoribose 1-diphosphate to orotate, leading to the formation of orotidine monophosphate (OMP). The polypeptide is Orotate phosphoribosyltransferase (Streptococcus sanguinis (strain SK36)).